The chain runs to 148 residues: Large ribosomal subunit protein uL15 (148 aa).

The tract at residues 1 to 61 (MKINDLKPAP…GGQMPLQRRV (61 aa)) is disordered.

Belongs to the universal ribosomal protein uL15 family. As to quaternary structure, part of the 50S ribosomal subunit.

In terms of biological role, binds to the 23S rRNA. This is Large ribosomal subunit protein uL15 from Thermodesulfovibrio yellowstonii (strain ATCC 51303 / DSM 11347 / YP87).